We begin with the raw amino-acid sequence, 306 residues long: Mitochondrial basic amino acids transporter (306 aa).

The next 6 membrane-spanning stretches (helical) occupy residues 2-22 (ALDF…GHPF), 61-81 (GLGS…GVQG), 96-116 (FLAG…MELA), 153-172 (GMVS…FLTY), 187-207 (LLVP…WLST), and 255-275 (LLRA…VLTY). 3 Solcar repeats span residues 2–86 (ALDF…TLRA), 90–178 (DSPL…LTRA), and 190–275 (PKLL…VLTY). The segment at 283–306 (VDSEAAPGASTTPAGPALAQPSSL) is disordered. Residues 287-306 (AAPGASTTPAGPALAQPSSL) are compositionally biased toward low complexity.

The protein belongs to the mitochondrial carrier (TC 2.A.29) family.

Its subcellular location is the mitochondrion inner membrane. It catalyses the reaction L-lysine(out) + L-arginine(in) = L-lysine(in) + L-arginine(out). It carries out the reaction L-histidine(out) + L-arginine(in) = L-histidine(in) + L-arginine(out). The enzyme catalyses L-ornithine(in) + L-arginine(out) = L-ornithine(out) + L-arginine(in). The catalysed reaction is L-homoarginine(in) + L-arginine(out) = L-homoarginine(out) + L-arginine(in). It catalyses the reaction N(omega)-methyl-L-arginine(in) + L-arginine(out) = N(omega)-methyl-L-arginine(out) + L-arginine(in). It carries out the reaction L-arginine(in) = L-arginine(out). The enzyme catalyses L-lysine(in) = L-lysine(out). The catalysed reaction is L-ornithine(in) = L-ornithine(out). It catalyses the reaction L-histidine(out) = L-histidine(in). In terms of biological role, mitochondrial transporter of arginine, lysine, homoarginine, methylarginine and, to a much lesser extent, ornithine and histidine. Does not transport carnitine nor acylcarnitines. Functions by both counter-exchange and uniport mechanisms. Plays a physiological role in the import of basic amino acids into mitochondria for mitochondrial protein synthesis and amino acid degradation. This chain is Mitochondrial basic amino acids transporter (Slc25a29), found in Rattus norvegicus (Rat).